Here is a 128-residue protein sequence, read N- to C-terminus: Claw keratin (128 aa).

A run of 2 repeats spans residues 83-91 and 92-100. Residues 83–104 form a 3 X 9 AA tandem repeats, Gly-rich region; that stretch reads GGYGGLGGYGGYGGLGGYGGYG. Residues 101–109 form a 3; approximate repeat; that stretch reads GGYGGFGSC.

It belongs to the avian keratin family. Abundantly expressed in the claw and at a low level in feather tissue.

The polypeptide is Claw keratin (CKER1) (Gallus gallus (Chicken)).